Here is a 257-residue protein sequence, read N- to C-terminus: 3-deoxy-manno-octulosonate cytidylyltransferase (257 aa).

This sequence belongs to the KdsB family.

The protein resides in the cytoplasm. It catalyses the reaction 3-deoxy-alpha-D-manno-oct-2-ulosonate + CTP = CMP-3-deoxy-beta-D-manno-octulosonate + diphosphate. It participates in nucleotide-sugar biosynthesis; CMP-3-deoxy-D-manno-octulosonate biosynthesis; CMP-3-deoxy-D-manno-octulosonate from 3-deoxy-D-manno-octulosonate and CTP: step 1/1. The protein operates within bacterial outer membrane biogenesis; lipopolysaccharide biosynthesis. Its function is as follows. Activates KDO (a required 8-carbon sugar) for incorporation into bacterial lipopolysaccharide in Gram-negative bacteria. The protein is 3-deoxy-manno-octulosonate cytidylyltransferase of Xylella fastidiosa (strain M23).